Here is a 157-residue protein sequence, read N- to C-terminus: Class 10 plant pathogenesis-related protein 2F (157 aa).

D8 is a trans-zeatin binding site. Ca(2+) contacts are provided by P32, V35, and I38. Trans-zeatin-binding residues include E60, H69, Y81, and Y83.

The protein belongs to the BetVI family.

The protein resides in the cytoplasm. The protein localises to the cytosol. Its function is as follows. Class II ribonuclease (RNase). Binds to cytokinins. Interacts with melatonin. The protein is Class 10 plant pathogenesis-related protein 2F of Lupinus luteus (European yellow lupine).